The following is a 618-amino-acid chain: Chaperone protein HtpG (618 aa).

The tract at residues 1–340 (MATKHQFQTE…SEDLPLNVSR (340 aa)) is a; substrate-binding. The interval 341–545 (EILQQNKILA…KEDNNPMMAN (205 aa)) is b. Residues 546–618 (LMAQMGQKVP…ELNSLLLQSL (73 aa)) form a c region.

This sequence belongs to the heat shock protein 90 family. As to quaternary structure, homodimer.

It is found in the cytoplasm. Its function is as follows. Molecular chaperone. Has ATPase activity. This is Chaperone protein HtpG from Helicobacter hepaticus (strain ATCC 51449 / 3B1).